The primary structure comprises 179 residues: Adenine phosphoribosyltransferase (179 aa).

Belongs to the purine/pyrimidine phosphoribosyltransferase family. As to quaternary structure, homodimer.

The protein localises to the cytoplasm. It catalyses the reaction AMP + diphosphate = 5-phospho-alpha-D-ribose 1-diphosphate + adenine. It participates in purine metabolism; AMP biosynthesis via salvage pathway; AMP from adenine: step 1/1. Functionally, catalyzes a salvage reaction resulting in the formation of AMP, that is energically less costly than de novo synthesis. The chain is Adenine phosphoribosyltransferase from Helicobacter pylori (strain J99 / ATCC 700824) (Campylobacter pylori J99).